The following is a 134-amino-acid chain: Replication enhancer protein (134 aa).

This sequence belongs to the geminiviridae replication enhancer protein family. In terms of assembly, homooligomer. Interacts with the replication-associated protein (REP). Interacts with host proliferating cell nuclear antigen (PCNA). Interacts with host retinoblastoma-related protein 1 (RBR1), and may thereby deregulate the host cell cycle. Oligomerization and interaction with PCNA are necessary for optimal replication enhancement.

In terms of biological role, increases viral DNA accumulation. Enhances infectivity and symptom expression. The protein is Replication enhancer protein of Solanum lycopersicum (Tomato).